A 455-amino-acid chain; its full sequence is Bifunctional protein GlmU (455 aa).

Positions 1 to 228 (MNNTLTTIIL…EFEIEGVNNR (228 aa)) are pyrophosphorylase. UDP-N-acetyl-alpha-D-glucosamine contacts are provided by residues 10–13 (LAAG), Lys24, Gln75, 80–81 (GT), 102–104 (YGD), Gly138, Glu153, Asn168, and Asn226. Asp104 lines the Mg(2+) pocket. Position 226 (Asn226) interacts with Mg(2+). Residues 229 to 249 (QQLAQLERKWQAKLVEDLQVQ) form a linker region. Positions 250 to 455 (GVQFADPNRV…DNYQRPEKKK (206 aa)) are N-acetyltransferase. UDP-N-acetyl-alpha-D-glucosamine-binding residues include Arg332 and Lys350. The active-site Proton acceptor is His362. The UDP-N-acetyl-alpha-D-glucosamine site is built by Tyr365 and Asn376. Residues Ala379, 385 to 386 (NY), Ala422, and Arg439 each bind acetyl-CoA.

It in the N-terminal section; belongs to the N-acetylglucosamine-1-phosphate uridyltransferase family. In the C-terminal section; belongs to the transferase hexapeptide repeat family. In terms of assembly, homotrimer. The cofactor is Mg(2+).

Its subcellular location is the cytoplasm. The enzyme catalyses alpha-D-glucosamine 1-phosphate + acetyl-CoA = N-acetyl-alpha-D-glucosamine 1-phosphate + CoA + H(+). The catalysed reaction is N-acetyl-alpha-D-glucosamine 1-phosphate + UTP + H(+) = UDP-N-acetyl-alpha-D-glucosamine + diphosphate. Its pathway is nucleotide-sugar biosynthesis; UDP-N-acetyl-alpha-D-glucosamine biosynthesis; N-acetyl-alpha-D-glucosamine 1-phosphate from alpha-D-glucosamine 6-phosphate (route II): step 2/2. It participates in nucleotide-sugar biosynthesis; UDP-N-acetyl-alpha-D-glucosamine biosynthesis; UDP-N-acetyl-alpha-D-glucosamine from N-acetyl-alpha-D-glucosamine 1-phosphate: step 1/1. It functions in the pathway bacterial outer membrane biogenesis; LPS lipid A biosynthesis. In terms of biological role, catalyzes the last two sequential reactions in the de novo biosynthetic pathway for UDP-N-acetylglucosamine (UDP-GlcNAc). The C-terminal domain catalyzes the transfer of acetyl group from acetyl coenzyme A to glucosamine-1-phosphate (GlcN-1-P) to produce N-acetylglucosamine-1-phosphate (GlcNAc-1-P), which is converted into UDP-GlcNAc by the transfer of uridine 5-monophosphate (from uridine 5-triphosphate), a reaction catalyzed by the N-terminal domain. This chain is Bifunctional protein GlmU, found in Psychrobacter sp. (strain PRwf-1).